The primary structure comprises 365 residues: Histidinol-phosphate aminotransferase (365 aa).

An N6-(pyridoxal phosphate)lysine modification is found at Lys227.

The protein belongs to the class-II pyridoxal-phosphate-dependent aminotransferase family. Histidinol-phosphate aminotransferase subfamily. In terms of assembly, homodimer. The cofactor is pyridoxal 5'-phosphate.

The catalysed reaction is L-histidinol phosphate + 2-oxoglutarate = 3-(imidazol-4-yl)-2-oxopropyl phosphate + L-glutamate. It functions in the pathway amino-acid biosynthesis; L-histidine biosynthesis; L-histidine from 5-phospho-alpha-D-ribose 1-diphosphate: step 7/9. The sequence is that of Histidinol-phosphate aminotransferase from Campylobacter concisus (strain 13826).